The sequence spans 283 residues: Lolitrem B biosynthesis cluster protein S (283 aa).

The signal sequence occupies residues 1–27; sequence MSRSDWIFISLQGFFCLAGVIWKSREG. Helical transmembrane passes span 73 to 93, 112 to 132, 157 to 177, 219 to 239, and 250 to 270; these read WFWL…LIIL, LGYL…SLWI, IFWC…VATL, MTGT…ALEA, and VRMF…DVLL.

Belongs to the ltmS family.

The protein localises to the membrane. Its function is as follows. Part of the gene cluster that mediates the biosynthesis of lolitrems, indole-diterpene mycotoxins that are potent tremorgens in mammals, and are synthesized by clavicipitaceous fungal endophytes in association with their grass hosts. The geranylgeranyl diphosphate (GGPP) synthase ltmG is proposed to catalyze the first step in lolitrem biosynthesis. LtmG catalyzes a series of iterative condensations of isopentenyl diphosphate (IPP) with dimethylallyl diphosphate (DMAPP), geranyl diphosphate (GPP), and farnesyl diphosphate (FPP), to form GGPP. GGPP then condenses with indole-3-glycerol phosphate to form 3-geranylgeranylindole, an acyclic intermediate, to be incorporated into paxilline. Either ltmG or ltmC could be responsible for this step, as both are putative prenyl transferases. The FAD-dependent monooxygenase ltmM then catalyzes the epoxidation of the two terminal alkenes of the geranylgeranyl moiety, which is subsequently cyclized by ltmB, to paspaline. The cytochrome P450 monooxygenases ltmQ and ltmP can sequentially oxidize paspaline to terpendole E and terpendole F. Alternatively, ltmP converts paspaline to an intermediate which is oxidized by ltmQ to terpendole F. LtmF, ltmK, ltmE and ltmJ appear to be unique to the epichloe endophytes. The prenyltransferase ltmF is involved in the 27-hydroxyl-O-prenylation. The cytochrome P450 monooxygenase ltmK is required for the oxidative acetal ring formation. The multi-functional prenyltransferase ltmE is required for C20- and C21-prenylations of the indole ring of paspalanes and acts together with the cytochrome P450 monooxygenase ltmJ to yield lolitremanes by multiple oxidations and ring closures. The stereoisomer pairs of lolitriol and lolitrem N or lolitrem B and lolitrem F may be attributed to variations in the way in which ring closure can occur under the action of ltmJ. While the major product of this pathway is lolitrem B, the prenyl transferases and cytochrome P450 monooxygenases identified in this pathway have a remarkable versatility in their regio- and stereo-specificities to generate a diverse range of metabolites that are products of a metabolic grid rather than a linear pathway. This is Lolitrem B biosynthesis cluster protein S from Epichloe festucae (strain Fl1).